The sequence spans 229 residues: Deleted in azoospermia-like (229 aa).

Residues 47-128 (NTLFVGGIDM…PAIMKERSSR (82 aa)) enclose the RRM domain. Positions 172–198 (PYSYSSPPGIMVPQVPMNYAQTTYAYQ) constitute a DAZ domain.

It belongs to the RRM DAZ family. Testis and ovary specific. In ovary, it is localized in the cortex of oocytes. At the onset of embryogenesis, maternal product is located at the vegetal pole, before migrating toward blastomeres through cytoplasmic streams as early embryogenesis proceededs.

The protein resides in the cytoplasm. Functionally, RNA-binding protein involved in gametogenesis in both males and females. Acts by binding to the 3'-UTR of mRNA, specifically recognizing GUU triplets, and promoting the translation of key transcripts. Establishes oocyte polarity through interaction with Bucky ball (BUC). Interacts with Bucky ball (BUC) mRNA to mediate Balbiani body formation and oocyte polarity during early oogenesis. In Danio rerio (Zebrafish), this protein is Deleted in azoospermia-like (dazl).